The chain runs to 217 residues: 3,4-dihydroxy-2-butanone 4-phosphate synthase (217 aa).

Residues 37 to 38 (RE), aspartate 42, 150 to 154 (RRGHT), and glutamate 174 each bind D-ribulose 5-phosphate. Glutamate 38 contributes to the Mg(2+) binding site. Histidine 153 provides a ligand contact to Mg(2+).

It belongs to the DHBP synthase family. In terms of assembly, homodimer. It depends on Mg(2+) as a cofactor. The cofactor is Mn(2+).

It carries out the reaction D-ribulose 5-phosphate = (2S)-2-hydroxy-3-oxobutyl phosphate + formate + H(+). Its pathway is cofactor biosynthesis; riboflavin biosynthesis; 2-hydroxy-3-oxobutyl phosphate from D-ribulose 5-phosphate: step 1/1. Functionally, catalyzes the conversion of D-ribulose 5-phosphate to formate and 3,4-dihydroxy-2-butanone 4-phosphate. This is 3,4-dihydroxy-2-butanone 4-phosphate synthase from Serratia proteamaculans (strain 568).